The chain runs to 178 residues: Large ribosomal subunit protein uL6 (178 aa).

It belongs to the universal ribosomal protein uL6 family. In terms of assembly, part of the 50S ribosomal subunit.

This protein binds to the 23S rRNA, and is important in its secondary structure. It is located near the subunit interface in the base of the L7/L12 stalk, and near the tRNA binding site of the peptidyltransferase center. This is Large ribosomal subunit protein uL6 from Aliarcobacter butzleri (strain RM4018) (Arcobacter butzleri).